Reading from the N-terminus, the 457-residue chain is UDP-N-acetylmuramoyl-tripeptide--D-alanyl-D-alanine ligase (457 aa).

109 to 115 contacts ATP; sequence GSSGKTT.

The protein belongs to the MurCDEF family. MurF subfamily.

The protein localises to the cytoplasm. It carries out the reaction D-alanyl-D-alanine + UDP-N-acetyl-alpha-D-muramoyl-L-alanyl-gamma-D-glutamyl-meso-2,6-diaminopimelate + ATP = UDP-N-acetyl-alpha-D-muramoyl-L-alanyl-gamma-D-glutamyl-meso-2,6-diaminopimeloyl-D-alanyl-D-alanine + ADP + phosphate + H(+). It participates in cell wall biogenesis; peptidoglycan biosynthesis. In terms of biological role, involved in cell wall formation. Catalyzes the final step in the synthesis of UDP-N-acetylmuramoyl-pentapeptide, the precursor of murein. The sequence is that of UDP-N-acetylmuramoyl-tripeptide--D-alanyl-D-alanine ligase from Haemophilus influenzae (strain ATCC 51907 / DSM 11121 / KW20 / Rd).